The primary structure comprises 491 residues: Protein nucleotidyltransferase YdiU (491 aa).

Residues glycine 94, glycine 96, arginine 97, lysine 117, aspartate 129, glycine 130, arginine 180, and arginine 187 each contribute to the ATP site. Residue aspartate 256 is the Proton acceptor of the active site. Asparagine 257 and aspartate 266 together coordinate Mg(2+). Aspartate 266 is an ATP binding site.

It belongs to the SELO family. It depends on Mg(2+) as a cofactor. The cofactor is Mn(2+).

The catalysed reaction is L-seryl-[protein] + ATP = 3-O-(5'-adenylyl)-L-seryl-[protein] + diphosphate. It catalyses the reaction L-threonyl-[protein] + ATP = 3-O-(5'-adenylyl)-L-threonyl-[protein] + diphosphate. The enzyme catalyses L-tyrosyl-[protein] + ATP = O-(5'-adenylyl)-L-tyrosyl-[protein] + diphosphate. It carries out the reaction L-histidyl-[protein] + UTP = N(tele)-(5'-uridylyl)-L-histidyl-[protein] + diphosphate. The catalysed reaction is L-seryl-[protein] + UTP = O-(5'-uridylyl)-L-seryl-[protein] + diphosphate. It catalyses the reaction L-tyrosyl-[protein] + UTP = O-(5'-uridylyl)-L-tyrosyl-[protein] + diphosphate. Nucleotidyltransferase involved in the post-translational modification of proteins. It can catalyze the addition of adenosine monophosphate (AMP) or uridine monophosphate (UMP) to a protein, resulting in modifications known as AMPylation and UMPylation. The sequence is that of Protein nucleotidyltransferase YdiU from Brevibacillus brevis (strain 47 / JCM 6285 / NBRC 100599).